Reading from the N-terminus, the 387-residue chain is Krueppel-like factor 17 (387 aa).

Disordered stretches follow at residues Phe28–Val54, Ser213–Ser234, and Arg257–Ser277. Over residues Asp30 to Arg46 the composition is skewed to polar residues. Basic and acidic residues predominate over residues Arg257–Ser270. C2H2-type zinc fingers lie at residues Tyr280 to His304, Tyr310 to His334, and His340 to His362. The segment at Gln357–Leu387 is disordered.

This sequence belongs to the Sp1 C2H2-type zinc-finger protein family.

The protein resides in the nucleus. Its function is as follows. Transcription repressor that binds to the promoter of target genes and prevents their expression. Acts as a negative regulator of epithelial-mesenchymal transition and metastasis in breast cancer. Specifically binds the 5'-CACCC-3' sequence in the promoter of ID1, a key metastasis regulator in breast cancer, and repress its expression. May be a germ cell-specific transcription factor that plays important roles in spermatid differentiation and oocyte development. This chain is Krueppel-like factor 17 (KLF17), found in Sus scrofa (Pig).